A 533-amino-acid chain; its full sequence is Probable ADP-ribosylation factor-binding protein C25H2.16c (533 aa).

Positions 15–151 (ATEPYAFEPD…LLSYKGYTFP (137 aa)) constitute a VHS domain. Residues 178 to 305 (REAMSAKLQE…LLTQYDHLLE (128 aa)) form the GAT domain. The residue at position 320 (serine 320) is a Phosphoserine. One can recognise a GAE domain in the interval 417–532 (NNFTSTCAFE…EYTGQSSIRL (116 aa)).

It belongs to the GGA protein family.

The protein localises to the golgi apparatus. It localises to the trans-Golgi network. In terms of biological role, may play a role in the regulation of membrane traffic through the trans-Golgi network. This is Probable ADP-ribosylation factor-binding protein C25H2.16c from Schizosaccharomyces pombe (strain 972 / ATCC 24843) (Fission yeast).